A 380-amino-acid chain; its full sequence is Probable protein phosphatase 2C 2 (380 aa).

A PPM-type phosphatase domain is found at 122 to 376 (GYSVYCKRGK…DDISVMLIQL (255 aa)). Positions 158, 159, 321, and 367 each coordinate Mn(2+).

This sequence belongs to the PP2C family. The cofactor is Mg(2+). Requires Mn(2+) as cofactor.

The enzyme catalyses O-phospho-L-seryl-[protein] + H2O = L-seryl-[protein] + phosphate. It carries out the reaction O-phospho-L-threonyl-[protein] + H2O = L-threonyl-[protein] + phosphate. This Arabidopsis thaliana (Mouse-ear cress) protein is Probable protein phosphatase 2C 2.